A 157-amino-acid chain; its full sequence is Transcription elongation factor GreA (157 aa).

Residues L12–K74 are a coiled coil.

This sequence belongs to the GreA/GreB family.

In terms of biological role, necessary for efficient RNA polymerase transcription elongation past template-encoded arresting sites. The arresting sites in DNA have the property of trapping a certain fraction of elongating RNA polymerases that pass through, resulting in locked ternary complexes. Cleavage of the nascent transcript by cleavage factors such as GreA or GreB allows the resumption of elongation from the new 3'terminus. GreA releases sequences of 2 to 3 nucleotides. The polypeptide is Transcription elongation factor GreA (Caldanaerobacter subterraneus subsp. tengcongensis (strain DSM 15242 / JCM 11007 / NBRC 100824 / MB4) (Thermoanaerobacter tengcongensis)).